The chain runs to 520 residues: O-methyltransferase cicE (520 aa).

S-adenosyl-L-methionine is bound by residues 300-301 (GG), Asp-323, 355-356 (NF), and Arg-371.

The protein belongs to the class I-like SAM-binding methyltransferase superfamily. Cation-independent O-methyltransferase family.

It participates in phytotoxin biosynthesis. Its function is as follows. O-methyltransferase; part of the gene cluster that mediates the biosynthesis of cichorine, a phytotoxin active against knapweed, corn, and soybeans. The first step in the pathway is performed by the non-reducing polyketide synthase pkbA that condenses one acetyl-CoA starter unit with 3 malonyl-CoA units. PkbA also catalyzes one methylation step to produce 3-methylorsellinate. The nonribosomal peptide synthase-like protein cicB, the cytochrome P450 monooxygenase cicH and the O-methyltransferase cicE are involved in the conversion of 3-methylorsellinate into nidulol. CicB converts 3-methylorsellinate to a yet unidentified intermediate, cicH may play a ring-closing role for cichorine and cicE is plausibly responsible for the methylation of one of the phenol groups. The oxidoreductase cicC acts downstream with still unidentified enzymes to further convert nidulol into cichorine. The protein is O-methyltransferase cicE of Emericella nidulans (strain FGSC A4 / ATCC 38163 / CBS 112.46 / NRRL 194 / M139) (Aspergillus nidulans).